Here is a 201-residue protein sequence, read N- to C-terminus: Holliday junction branch migration complex subunit RuvA (201 aa).

The tract at residues 1 to 63 (MIGCLIGEVF…EDAQQLYGFI (63 aa)) is domain I. The domain II stretch occupies residues 64 to 142 (DAQEKLIFRT…ALSVQATTGS (79 aa)). Residues 143 to 152 (TVTSAQIQFS) are flexible linker. The domain III stretch occupies residues 152–201 (SSNSPIAEAEAALQSLGYKPIEAQKAIAAVKADYTEAADLIRAALKSMMK).

It belongs to the RuvA family. In terms of assembly, homotetramer. Forms an RuvA(8)-RuvB(12)-Holliday junction (HJ) complex. HJ DNA is sandwiched between 2 RuvA tetramers; dsDNA enters through RuvA and exits via RuvB. An RuvB hexamer assembles on each DNA strand where it exits the tetramer. Each RuvB hexamer is contacted by two RuvA subunits (via domain III) on 2 adjacent RuvB subunits; this complex drives branch migration. In the full resolvosome a probable DNA-RuvA(4)-RuvB(12)-RuvC(2) complex forms which resolves the HJ.

It is found in the cytoplasm. Functionally, the RuvA-RuvB-RuvC complex processes Holliday junction (HJ) DNA during genetic recombination and DNA repair, while the RuvA-RuvB complex plays an important role in the rescue of blocked DNA replication forks via replication fork reversal (RFR). RuvA specifically binds to HJ cruciform DNA, conferring on it an open structure. The RuvB hexamer acts as an ATP-dependent pump, pulling dsDNA into and through the RuvAB complex. HJ branch migration allows RuvC to scan DNA until it finds its consensus sequence, where it cleaves and resolves the cruciform DNA. The sequence is that of Holliday junction branch migration complex subunit RuvA from Acinetobacter baylyi (strain ATCC 33305 / BD413 / ADP1).